The chain runs to 239 residues: Leucine rich adaptor protein 1 (239 aa).

2 LRR repeats span residues 55-83 and 93-114; these read LGDKIMALRMELAYLRAIDVKILQQLVTL and LLEERGTLTSHCSSLTSSQYSL. The span at 105 to 116 shows a compositional bias: low complexity; the sequence is SSLTSSQYSLTG. A disordered region spans residues 105–138; sequence SSLTSSQYSLTGGSPGRSRRGSWDSLPDTSSTDR. S118, S126, and S129 each carry phosphoserine.

Forms a tripartite complex with CDC42BPA/CDC42BPB and MYO18A acting as an adapter connecting both. Its binding to CDC42BPA/CDC42BPB results in their activation by abolition of their negative autoregulation. Interacts with CDC42BPA and CDC42BPB. In terms of processing, phosphorylated.

It localises to the cytoplasm. In terms of biological role, acts as an activator of the canonical NF-kappa-B pathway and drive the production of pro-inflammatory cytokines. Promotes the antigen (Ag)-presenting and priming function of dendritic cells via the canonical NF-kappa-B pathway. In concert with MYO18A and CDC42BPA/CDC42BPB, is involved in modulating lamellar actomyosin retrograde flow that is crucial to cell protrusion and migration. Activates CDC42BPA/CDC42BPB and targets it to actomyosin through its interaction with MYO18A, leading to MYL9/MLC2 phosphorylation and MYH9/MYH10-dependent actomyosin assembly in the lamella. The polypeptide is Leucine rich adaptor protein 1 (Lurap1) (Mus musculus (Mouse)).